The chain runs to 324 residues: NADH-ubiquinone oxidoreductase chain 1 (324 aa).

Transmembrane regions (helical) follow at residues 5–25 (ILLY…ATAF), 75–95 (FLFL…WMPL), 106–126 (LGLL…LGSG), 146–166 (ISYE…TGGF), 177–197 (TVWL…STLA), 228–248 (LFFL…VILF), 259–279 (QIST…FLWI), and 299–319 (FLPL…ATAS).

It belongs to the complex I subunit 1 family.

It is found in the mitochondrion inner membrane. The enzyme catalyses a ubiquinone + NADH + 5 H(+)(in) = a ubiquinol + NAD(+) + 4 H(+)(out). Its function is as follows. Core subunit of the mitochondrial membrane respiratory chain NADH dehydrogenase (Complex I) that is believed to belong to the minimal assembly required for catalysis. Complex I functions in the transfer of electrons from NADH to the respiratory chain. The immediate electron acceptor for the enzyme is believed to be ubiquinone. This Squalus acanthias (Spiny dogfish) protein is NADH-ubiquinone oxidoreductase chain 1 (MT-ND1).